Reading from the N-terminus, the 417-residue chain is Putative plant UBX domain-containing protein 14 (417 aa).

The UBX domain maps to 335-415 (DRSVVCSICV…GIANSMISVT (81 aa)).

The chain is Putative plant UBX domain-containing protein 14 from Arabidopsis thaliana (Mouse-ear cress).